We begin with the raw amino-acid sequence, 125 residues long: Small ribosomal subunit protein eS8 (125 aa).

Positions 1–34 (MQWQGRSVRKSTGGRYSPSRGKRRREIGSAPAET) are disordered.

Belongs to the eukaryotic ribosomal protein eS8 family. Part of the 30S ribosomal subunit.

This chain is Small ribosomal subunit protein eS8, found in Methanospirillum hungatei JF-1 (strain ATCC 27890 / DSM 864 / NBRC 100397 / JF-1).